We begin with the raw amino-acid sequence, 159 residues long: Urease accessory protein UreE (159 aa).

It belongs to the UreE family.

The protein localises to the cytoplasm. Its function is as follows. Involved in urease metallocenter assembly. Binds nickel. Probably functions as a nickel donor during metallocenter assembly. The sequence is that of Urease accessory protein UreE from Acinetobacter baylyi (strain ATCC 33305 / BD413 / ADP1).